We begin with the raw amino-acid sequence, 210 residues long: Ribosomal RNA large subunit methyltransferase E (210 aa).

Positions 61, 63, 81, 97, and 122 each coordinate S-adenosyl-L-methionine. Lys162 functions as the Proton acceptor in the catalytic mechanism. Residues 187–196 (KPEASRKRSP) are compositionally biased toward basic and acidic residues. Positions 187–210 (KPEASRKRSPEVYALGQGKRAHMK) are disordered.

Belongs to the class I-like SAM-binding methyltransferase superfamily. RNA methyltransferase RlmE family.

The protein localises to the cytoplasm. It carries out the reaction uridine(2552) in 23S rRNA + S-adenosyl-L-methionine = 2'-O-methyluridine(2552) in 23S rRNA + S-adenosyl-L-homocysteine + H(+). Functionally, specifically methylates the uridine in position 2552 of 23S rRNA at the 2'-O position of the ribose in the fully assembled 50S ribosomal subunit. The sequence is that of Ribosomal RNA large subunit methyltransferase E from Stenotrophomonas maltophilia (strain K279a).